The primary structure comprises 1117 residues: DNA-directed RNA polymerase subunit beta (1117 aa).

A disordered region spans residues 1094–1117; it reads QLARRTPPRPTYESLSRESLDDDE. Positions 1108 to 1117 are enriched in basic and acidic residues; the sequence is LSRESLDDDE.

Belongs to the RNA polymerase beta chain family. In cyanobacteria the RNAP catalytic core is composed of 2 alpha, 1 beta, 1 beta', 1 gamma and 1 omega subunit. When a sigma factor is associated with the core the holoenzyme is formed, which can initiate transcription.

It catalyses the reaction RNA(n) + a ribonucleoside 5'-triphosphate = RNA(n+1) + diphosphate. Its function is as follows. DNA-dependent RNA polymerase catalyzes the transcription of DNA into RNA using the four ribonucleoside triphosphates as substrates. The chain is DNA-directed RNA polymerase subunit beta from Trichormus variabilis (strain ATCC 29413 / PCC 7937) (Anabaena variabilis).